Here is a 670-residue protein sequence, read N- to C-terminus: Probable ATP-citrate synthase subunit 1 (670 aa).

The segment at 1-22 (MPSATTASTNGANGASASPAPG) is disordered. ATP is bound by residues 257–277 (LLRY…EVGG) and 308–334 (FKTE…KNKS). Glu-274 is a binding site for Mg(2+). The active-site Tele-phosphohistidine intermediate is the His-316. 335 to 345 (MREAGFYVPDT) lines the CoA pocket.

The protein belongs to the succinate/malate CoA ligase alpha subunit family. Composed of two subunits.

The protein localises to the cytoplasm. It carries out the reaction oxaloacetate + acetyl-CoA + ADP + phosphate = citrate + ATP + CoA. Its function is as follows. Catalyzes the formation of cytosolic acetyl-CoA, which is mainly used for the biosynthesis of fatty acids and sterols. The chain is Probable ATP-citrate synthase subunit 1 from Neurospora crassa (strain ATCC 24698 / 74-OR23-1A / CBS 708.71 / DSM 1257 / FGSC 987).